The following is a 449-amino-acid chain: Glucose-6-phosphate isomerase (449 aa).

Glu291 functions as the Proton donor in the catalytic mechanism. Catalysis depends on residues His312 and Lys426.

This sequence belongs to the GPI family.

It localises to the cytoplasm. The catalysed reaction is alpha-D-glucose 6-phosphate = beta-D-fructose 6-phosphate. The protein operates within carbohydrate biosynthesis; gluconeogenesis. It functions in the pathway carbohydrate degradation; glycolysis; D-glyceraldehyde 3-phosphate and glycerone phosphate from D-glucose: step 2/4. Its function is as follows. Catalyzes the reversible isomerization of glucose-6-phosphate to fructose-6-phosphate. This is Glucose-6-phosphate isomerase from Enterococcus faecalis (strain ATCC 700802 / V583).